We begin with the raw amino-acid sequence, 317 residues long: Serpentine receptor class delta-44 (317 aa).

A run of 6 helical transmembrane segments spans residues 5–25 (ILSV…IILI), 90–110 (MFHI…LTTF), 130–150 (ILFI…LVII), 185–205 (RVNG…CLLL), 235–255 (IFGH…SLIT), and 264–284 (FFIF…TMYF).

It belongs to the nematode receptor-like protein srd family.

Its subcellular location is the membrane. This Caenorhabditis elegans protein is Serpentine receptor class delta-44 (srd-44).